Here is an 803-residue protein sequence, read N- to C-terminus: 3',5'-cyclic-AMP phosphodiesterase 4D (803 aa).

Residues 1-103 are disordered; that stretch reads MEAEGSSVPA…SGASRVRHRG (103 aa). His52 and His56 each carry phosphoserine. The segment covering 58–85 has biased composition (pro residues); that stretch reads PPPPPPSPQPQLQPPPPPPLPPPPPPPG. 5 positions are modified to phosphoserine: Ser137, Ser294, Ser296, Ser343, and Ser370. Residues 338-358 are disordered; the sequence is EVEIPSPTQKEKEKKKRPMSQ. Positions 381 to 710 constitute a PDEase domain; it reads VKTEQEDVLA…EWYQSTIPQS (330 aa). Lys382 is covalently cross-linked (Glycyl lysine isopeptide (Lys-Gly) (interchain with G-Cter in SUMO)). His457 serves as the catalytic Proton donor. His457 serves as a coordination point for 3',5'-cyclic AMP. His457 lines the AMP pocket. Zn(2+) is bound by residues His461, His497, Asp498, and Asp615. Asp498, Asp615, Asn618, Gln666, and Phe669 together coordinate AMP. Residue Asp498 participates in Mg(2+) binding. Mn(2+) is bound at residue Asp498. Positions 666 and 669 each coordinate 3',5'-cyclic AMP. Disordered regions lie at residues 705–724 and 732–803; these read STIPQSPSPAPDDQEDGRQG and ELTL…CPDT. A compositionally biased stretch (polar residues) spans 757-768; it reads CSDSKTLCTQDS. Over residues 774-789 the composition is skewed to acidic residues; sequence PLDEQVEEEAVAEEES.

This sequence belongs to the cyclic nucleotide phosphodiesterase family. PDE4 subfamily. In terms of assembly, homodimer for the long isoforms. Isoforms with truncated N-termini are monomeric. Binds ARRB2. Isoform 33 is part of a ternary complex containing PRKAR2A, PRKAR2B and AKAP9. Identified in a complex composed of RYR1, PDE4D, PKA, FKBP1A and protein phosphatase 1 (PP1). Interacts with PDE4DIP. Isoform 5 interacts (via N-terminal region) with SHANK2 (via proline-rich region); the interaction is increased in a PKA-dependent manner. Isoform 33, isoform 4, isoform 7, isoform 8 and isoform 9 but not isoform 32 and isoform 6 interact with SHANK2. Isoform 31 interacts weakly with SHANK2. Zn(2+) serves as cofactor. Mg(2+) is required as a cofactor. Requires Mn(2+) as cofactor. Post-translationally, isoform 1 and isoform 9 are rapidly activated by PKA through phosphorylation. Long isoforms that share a conserved PKA phosphorylation site in the N-terminus are also activated. Sumoylation of long isoforms by PIAS4 augments their activation by PKA phosphorylation and represses their inhibition by ERK phosphorylation. In terms of tissue distribution, expressed in epithelial cells. Isoform 33, isoform 4, isoform 5 and isoform 9 are expressed in brain. Isoform 33, isoform 5, isoform 8 and isoform 9 are expressed in heart (at protein level). Isoform 4 and isoform 6 are strongly expressed in cortex and cerebellum. Isoform 7 is strongly expressed in cortex and testis; weakly expressed in kidney, lung, spleen and cerebellum. Isoform 8 is strongly expressed in lung, heart and liver. Isoform 31, isoform 32, isoform 33, isoform 5 and isoform 9 are widely distributed.

Its subcellular location is the apical cell membrane. It is found in the cytoplasm. The protein resides in the membrane. The protein localises to the cytoskeleton. It localises to the microtubule organizing center. Its subcellular location is the centrosome. It carries out the reaction 3',5'-cyclic AMP + H2O = AMP + H(+). Its pathway is purine metabolism; 3',5'-cyclic AMP degradation; AMP from 3',5'-cyclic AMP: step 1/1. Its activity is regulated as follows. Activated by phosphatidic acid. Inhibited by rolipram. Its function is as follows. Hydrolyzes the second messenger cAMP, which is a key regulator of many important physiological processes. The protein is 3',5'-cyclic-AMP phosphodiesterase 4D (Pde4d) of Rattus norvegicus (Rat).